The chain runs to 105 residues: Small ribosomal subunit protein uS17 (105 aa).

The protein belongs to the universal ribosomal protein uS17 family. In terms of assembly, part of the 30S ribosomal subunit.

In terms of biological role, one of the primary rRNA binding proteins, it binds specifically to the 5'-end of 16S ribosomal RNA. This Thermus aquaticus protein is Small ribosomal subunit protein uS17.